We begin with the raw amino-acid sequence, 437 residues long: 3-phosphoshikimate 1-carboxyvinyltransferase (437 aa).

Positions 21, 22, and 26 each coordinate 3-phosphoshikimate. Lys21 is a phosphoenolpyruvate binding site. Positions 101 and 129 each coordinate phosphoenolpyruvate. 6 residues coordinate 3-phosphoshikimate: Ser172, Ser173, Gln174, Ser200, Asp314, and Lys341. Gln174 is a binding site for phosphoenolpyruvate. Residue Asp314 is the Proton acceptor of the active site. Residues Arg345, Arg388, and Lys414 each contribute to the phosphoenolpyruvate site.

Belongs to the EPSP synthase family. In terms of assembly, monomer.

The protein localises to the cytoplasm. The enzyme catalyses 3-phosphoshikimate + phosphoenolpyruvate = 5-O-(1-carboxyvinyl)-3-phosphoshikimate + phosphate. Its pathway is metabolic intermediate biosynthesis; chorismate biosynthesis; chorismate from D-erythrose 4-phosphate and phosphoenolpyruvate: step 6/7. Its function is as follows. Catalyzes the transfer of the enolpyruvyl moiety of phosphoenolpyruvate (PEP) to the 5-hydroxyl of shikimate-3-phosphate (S3P) to produce enolpyruvyl shikimate-3-phosphate and inorganic phosphate. This chain is 3-phosphoshikimate 1-carboxyvinyltransferase, found in Clostridioides difficile (strain 630) (Peptoclostridium difficile).